The chain runs to 293 residues: Ubiquinone biosynthesis protein COQ9-B, mitochondrial (293 aa).

Residues 21 to 73 (LRSDDQKQPPFSSSSTHAETPEHAEEQYQQQQSPPRYTDQAGEESEDYESEEQ) are disordered. Polar residues predominate over residues 29–38 (PPFSSSSTHA). Positions 61 to 72 (AGEESEDYESEE) are enriched in acidic residues. R219 provides a ligand contact to a 1,2-diacylglycero-3-phosphoethanolamine.

Belongs to the COQ9 family. Homodimer. Heterodimer; two heterodimers of COQ7:COQ9 come together on the same side of the lipid pseudo-bilayer and form a curved tetramer with a hydrophobic surface suitable for membrane interaction. These two tetramers assemble into a soluble octamer with a pseudo-bilayer of lipids captured within. Interacts with COQ7; this interaction allows ubiquinone (CoQ) isoprene intermediates presentation to COQ7 and facilitates the COQ7-mediated hydroxylase step.

It is found in the mitochondrion. It functions in the pathway cofactor biosynthesis; ubiquinone biosynthesis. In terms of biological role, membrane-associated protein that warps the membrane surface to access and bind aromatic isoprenes with high specificity, including ubiquinone (CoQ) isoprene intermediates and presents them directly to COQ7, therefore facilitating the COQ7-mediated hydroxylase step. Participates in the biosynthesis of coenzyme Q, also named ubiquinone, an essential lipid-soluble electron transporter for aerobic cellular respiration. The protein is Ubiquinone biosynthesis protein COQ9-B, mitochondrial (coq9-b) of Xenopus laevis (African clawed frog).